Consider the following 610-residue polypeptide: Mitochondrial import receptor subunit TOM70 (610 aa).

The residue at position 2 (Ala2) is an N-acetylalanine. Topologically, residues 2–41 (AASKPVEAAMAAAAAPASGNGVGSSGGTAAPGSGAGTLPR) are mitochondrial intermembrane. Residues 42-62 (WHVALAIGAPLLLGAGAMYLW) form a helical membrane-spanning segment. Residues 63-610 (SRRRRRREAG…KKYGLKPPTL (548 aa)) lie on the Cytoplasmic side of the membrane. Residues 69-109 (REAGGRGDASGLKRNSERKTPEGRASPALGSGPDGSGDSLE) are disordered. At Arg74 the chain carries Omega-N-methylarginine. Over residues 93 to 108 (ASPALGSGPDGSGDSL) the composition is skewed to low complexity. 5 positions are modified to phosphoserine: Ser94, Ser99, Ser104, Ser107, and Ser112. TPR repeat units lie at residues 116-149 (AQAAKNKGNKYFKAGKYEQAIQCYTEAISLCPTE) and 155-188 (STFYQNRAAAFEQLQKWKEVAQDCTKAVELNPKY). At Lys187 the chain carries N6-acetyllysine. Lys277 participates in a covalent cross-link: Glycyl lysine isopeptide (Lys-Gly) (interchain with G-Cter in SUMO2). TPR repeat units follow at residues 296 to 329 (ENSGYLKAKQYMEEENYDKIISECSKEIDAQGKY), 331 to 364 (AEALLLRATFYLLIGSANAAKPDLDKVISLKEAN), 369 to 402 (ANALIKRGTMCMQQQQPMLSTQDFNMAAEIDPMN), 403 to 436 (SDVYHHRGQLKILLDLVEEAVADFDACIRLRPKF), 444 to 477 (CFALYRQAYTANNSSQVQAAMKGFEEVIKKFPRC), 478 to 511 (AEGYALYAQALTDQQQFGKADEMYDKCIDLEPDN), 513 to 546 (TTYVHKGLLQLQWKQDLDKGLELISKAIEIDNKC), and 547 to 580 (DFAYETMGTIEVQRGNMEKAIDMFNKAINLAKSE).

The protein belongs to the Tom70 family. Forms part of the preprotein translocase complex of the outer mitochondrial membrane (TOM complex) which consists of at least 7 different proteins (TOMM5, TOMM6, TOMM7, TOMM20, TOMM22, TOMM40 and TOMM70). Interacts with CAPN8. Interacts with TRADD, TRAF6 and STING. Interacts with MAVS. Interacts with HSPA8 and HSP90AA1; both interactions are required for preprotein mitochondrial import. The interaction with HSP90AA1 is direct and mediates the association of TOMM70 with IRF3 and TBK1. Upon mitochondrial depolarization, interacts with PINK1; the interaction is required for PINK1-TOM-TIM23 supercomplex formation which is critical for PINK1 stabilization at the outer mitochondrial membrane, kinase activation and downstream mitophagy.

The protein resides in the mitochondrion outer membrane. In terms of biological role, acts as a receptor of the preprotein translocase complex of the outer mitochondrial membrane (TOM complex). Recognizes and mediates the translocation of mitochondrial preproteins from the cytosol into the mitochondria in a chaperone dependent manner. Mediates TBK1 and IRF3 activation induced by MAVS in response to Sendai virus infection and promotes host antiviral responses during virus infection. This chain is Mitochondrial import receptor subunit TOM70, found in Rattus norvegicus (Rat).